A 294-amino-acid chain; its full sequence is Zinc finger protein CONSTANS-LIKE 3 (294 aa).

The Zn(2+) site is built by cysteine 8, cysteine 11, cysteine 31, histidine 36, cysteine 51, cysteine 54, cysteine 74, and histidine 79. The B box-type 1; atypical zinc finger occupies 8–50 (CDSCKSTAATLFCRADAAFLCGDCDGKIHTANKLASRHERVWL). Residues 51–93 (CEVCEQAPAHVTCKADAAALCVTCDRDIHSANPLSRRHERVPI) form a B box-type 2; atypical zinc finger. One can recognise a CCT domain in the interval 229-271 (REARVLRYREKRKNRKFEKTIRYASRKAYAEMRPRIKGRFAKR).

It belongs to the CONSTANS family.

Its subcellular location is the nucleus. This chain is Zinc finger protein CONSTANS-LIKE 3 (COL3), found in Arabidopsis thaliana (Mouse-ear cress).